The chain runs to 405 residues: L-rhamnonate dehydratase (405 aa).

Substrate is bound by residues histidine 33 and arginine 59. The Mg(2+) site is built by aspartate 226, glutamate 252, and glutamate 280. The Proton acceptor role is filled by histidine 329. Glutamate 349 lines the substrate pocket.

Belongs to the mandelate racemase/muconate lactonizing enzyme family. RhamD subfamily. As to quaternary structure, homooctamer; tetramer of dimers. Requires Mg(2+) as cofactor.

It carries out the reaction L-rhamnonate = 2-dehydro-3-deoxy-L-rhamnonate + H2O. In terms of biological role, catalyzes the dehydration of L-rhamnonate to 2-keto-3-deoxy-L-rhamnonate (KDR). This chain is L-rhamnonate dehydratase, found in Shigella boydii serotype 4 (strain Sb227).